The sequence spans 100 residues: Urease subunit gamma (100 aa).

It belongs to the urease gamma subunit family. Heterotrimer of UreA (gamma), UreB (beta) and UreC (alpha) subunits. Three heterotrimers associate to form the active enzyme.

The protein resides in the cytoplasm. The catalysed reaction is urea + 2 H2O + H(+) = hydrogencarbonate + 2 NH4(+). It functions in the pathway nitrogen metabolism; urea degradation; CO(2) and NH(3) from urea (urease route): step 1/1. The protein is Urease subunit gamma of Rhizobium rhizogenes (strain K84 / ATCC BAA-868) (Agrobacterium radiobacter).